Reading from the N-terminus, the 552-residue chain is MSEIALTVSLLSLVAVIGLWIGHIKVRGVSLGIGGVLFGGILVSHFMTQYGVKLDGHTLHFIQEFGLILFVYTIGIQVGPGFFASLRQSGLKLNAFAVMIVGISGILVILLHKIFDVPLPVILGIFSGAVTNTPSLGAGQQILTELGGESITAVMGMGYAIAYPFGIIGILLAMWLIRIIFKINVDKEADEFDSATNNKKDGLSTMNVRITNPNLNGLMLQEFPDFELHEVVYSRIKRNDELFVPKVHTQIQIGDILHLVGTKTALHKMQLILGEEVNVSLSTKGTMYRTERAVVTNEKVFGKQIRQLMLKGKYDVVISRLNRAGVELVPNGQMTLQFGDVLNLVGRQEDIEAVMAIIGNAQQKLQQVQMLPIFIGVGLGVLLGSIPIYLPGFPVALKLGLAGGPLVVALILARIGSIKKLYWFMPPSANLALREIGIVLFLAVVGWKAGGNFLNTLLSNDGLAWIGYGAIITFVPLIVTGLVARIYGKLNYLSLCGLLAGSMTDPPALAFANGIKEGNGAAALSYATVYPLVMFCRIILPQILAILLWVAG.

A run of 5 helical transmembrane segments spans residues 4-24, 28-48, 65-85, 95-115, and 157-177; these read IALT…IGHI, GVSL…HFMT, FGLI…FFAS, AFAV…HKIF, and MGYA…MWLI. RCK C-terminal domains lie at 193–275 and 277–360; these read DSAT…ILGE and VNVS…IIGN. The next 6 membrane-spanning stretches (helical) occupy residues 370 to 390, 393 to 413, 438 to 458, 463 to 483, 492 to 512, and 532 to 552; these read MLPI…PIYL, FPVA…LILA, IVLF…NTLL, LAWI…TGLV, YLSL…LAFA, and LVMF…WVAG.

It belongs to the AAE transporter (TC 2.A.81) family. YidE subfamily.

The protein localises to the cell membrane. The polypeptide is Putative transport protein HAPS_0158 (Glaesserella parasuis serovar 5 (strain SH0165) (Haemophilus parasuis)).